A 229-amino-acid chain; its full sequence is Gene 1 protein (229 aa).

This Mycobacterium phage L5 (Mycobacteriophage L5) protein is Gene 1 protein (1).